Here is a 466-residue protein sequence, read N- to C-terminus: Glutamate decarboxylase alpha (466 aa).

Positions 62 and 83 each coordinate substrate. Residues 126-127 (SS), T212, and H275 each bind pyridoxal 5'-phosphate. K276 carries the N6-(pyridoxal phosphate)lysine modification.

The protein belongs to the group II decarboxylase family. Homohexamer. Pyridoxal 5'-phosphate is required as a cofactor.

The enzyme catalyses L-glutamate + H(+) = 4-aminobutanoate + CO2. Its function is as follows. Converts glutamate to gamma-aminobutyrate (GABA), consuming one intracellular proton in the reaction. The gad system helps to maintain a near-neutral intracellular pH when cells are exposed to extremely acidic conditions. The ability to survive transit through the acidic conditions of the stomach is essential for successful colonization of the mammalian host by commensal and pathogenic bacteria. This chain is Glutamate decarboxylase alpha (gadA), found in Shigella flexneri.